The sequence spans 614 residues: Sorting nexin-18 (614 aa).

In terms of domain architecture, SH3 spans 1 to 61 (MALRARALYD…PASYVQVIRA (61 aa)). Residues 85 to 218 (GFEPLPAAPP…SQELGHGEPQ (134 aa)) are disordered. Over residues 90-101 (PAAPPAAFPPLL) the composition is skewed to pro residues. A compositionally biased stretch (acidic residues) spans 141–151 (SDDDWDDEWDD). Residues 266–376 (FQCTIDDPTK…HFLTCPSSTD (111 aa)) form the PX domain. 3 residues coordinate a 1,2-diacyl-sn-glycero-3-phospho-(1D-myo-inositol-4,5-bisphosphate): R302, K304, and R342. Positions 411–614 (LQEVESKIDG…EEALHKYDSV (204 aa)) constitute a BAR domain.

This sequence belongs to the sorting nexin family. Heterodimer with SNX9. Interacts with ITCH. Interacts with dynamin-2 (DNM2), SYNJ1 and WASL. Interacts with the AP-1 complex. Interacts with FCHSD1 (via the F-BAR domain).

The protein resides in the endomembrane system. It is found in the endosome membrane. Its subcellular location is the recycling endosome membrane. The protein localises to the cell membrane. It localises to the cytoplasmic vesicle membrane. In terms of biological role, involved in endocytosis and intracellular vesicle trafficking, both during interphase and at the end of mitosis. Required for efficient progress through mitosis and cytokinesis. Required for normal formation of the cleavage furrow at the end of mitosis. Plays a role in endocytosis via clathrin-coated pits, but also clathrin-independent, actin-dependent fluid-phase endocytosis. Plays a role in macropinocytosis. Binds to membranes enriched in phosphatidylinositol 4,5-bisphosphate and promotes membrane tubulation. Stimulates the GTPase activity of DNM2. Promotes DNM2 location at the plasma membrane. Together with DNM2, involved in autophagosome assembly by regulating trafficking from recycling endosomes of phospholipid scramblase ATG9A. The sequence is that of Sorting nexin-18 from Mus musculus (Mouse).